Here is a 316-residue protein sequence, read N- to C-terminus: Pantothenate kinase (316 aa).

95–102 is an ATP binding site; the sequence is GSVAVGKS.

This sequence belongs to the prokaryotic pantothenate kinase family.

It is found in the cytoplasm. It carries out the reaction (R)-pantothenate + ATP = (R)-4'-phosphopantothenate + ADP + H(+). The protein operates within cofactor biosynthesis; coenzyme A biosynthesis; CoA from (R)-pantothenate: step 1/5. This Salmonella agona (strain SL483) protein is Pantothenate kinase.